Here is a 101-residue protein sequence, read N- to C-terminus: Ubiquitin-related modifier 1 (101 aa).

Position 101 is a 1-thioglycine (Gly101). A Glycyl lysine isopeptide (Gly-Lys) (interchain with K-? in acceptor proteins) cross-link involves residue Gly101.

The protein belongs to the URM1 family. C-terminal thiocarboxylation occurs in 2 steps, it is first acyl-adenylated (-COAMP) via the hesA/moeB/thiF part of UBA4, then thiocarboxylated (-COSH) via the rhodanese domain of UBA4.

The protein resides in the cytoplasm. The protein operates within tRNA modification; 5-methoxycarbonylmethyl-2-thiouridine-tRNA biosynthesis. In terms of biological role, acts as a sulfur carrier required for 2-thiolation of mcm(5)S(2)U at tRNA wobble positions of cytosolic tRNA(Lys), tRNA(Glu) and tRNA(Gln). Serves as sulfur donor in tRNA 2-thiolation reaction by being thiocarboxylated (-COSH) at its C-terminus by the MOCS3 homolog UBA4. The sulfur is then transferred to tRNA to form 2-thiolation of mcm(5)S(2)U. Prior mcm(5) tRNA modification by the elongator complex is required for 2-thiolation. Also acts as a ubiquitin-like protein (UBL) that is covalently conjugated via an isopeptide bond to lysine residues of target proteins such as AHP1. The thiocarboxylated form serves as substrate for conjugation and oxidative stress specifically induces the formation of UBL-protein conjugates. The sequence is that of Ubiquitin-related modifier 1 from Debaryomyces hansenii (strain ATCC 36239 / CBS 767 / BCRC 21394 / JCM 1990 / NBRC 0083 / IGC 2968) (Yeast).